The sequence spans 158 residues: Ribosome maturation factor RimP (158 aa).

Belongs to the RimP family.

The protein localises to the cytoplasm. Its function is as follows. Required for maturation of 30S ribosomal subunits. This is Ribosome maturation factor RimP from Pseudomonas fluorescens (strain ATCC BAA-477 / NRRL B-23932 / Pf-5).